Consider the following 212-residue polypeptide: Nuclear phosphoprotein UL3 homolog (212 aa).

Belongs to the alphaherpesvirinae HHV-1 UL3 family. Post-translationally, phosphorylated.

It localises to the host nucleus. The protein is Nuclear phosphoprotein UL3 homolog of Equus caballus (Horse).